The following is a 458-amino-acid chain: Glutamyl-tRNA reductase (458 aa).

Substrate-binding positions include T49–R52, S109, E114–Q116, and Q120. C50 serves as the catalytic Nucleophile. Position 191-196 (G191–A196) interacts with NADP(+).

It belongs to the glutamyl-tRNA reductase family. As to quaternary structure, homodimer.

It catalyses the reaction (S)-4-amino-5-oxopentanoate + tRNA(Glu) + NADP(+) = L-glutamyl-tRNA(Glu) + NADPH + H(+). It functions in the pathway porphyrin-containing compound metabolism; protoporphyrin-IX biosynthesis; 5-aminolevulinate from L-glutamyl-tRNA(Glu): step 1/2. Functionally, catalyzes the NADPH-dependent reduction of glutamyl-tRNA(Glu) to glutamate 1-semialdehyde (GSA). The polypeptide is Glutamyl-tRNA reductase (Corynebacterium aurimucosum (strain ATCC 700975 / DSM 44827 / CIP 107346 / CN-1) (Corynebacterium nigricans)).